A 61-amino-acid chain; its full sequence is Large ribosomal subunit protein uL30 (61 aa).

It belongs to the universal ribosomal protein uL30 family. In terms of assembly, part of the 50S ribosomal subunit.

This Thermosipho melanesiensis (strain DSM 12029 / CIP 104789 / BI429) protein is Large ribosomal subunit protein uL30.